A 602-amino-acid chain; its full sequence is Zinc finger protein 652-B (602 aa).

A disordered region spans residues 60–232 (FQDSKPTNEV…PSDKAKSEEK (173 aa)). Positions 65-79 (PTNEVHAVKGERENS) are enriched in basic and acidic residues. Acidic residues-rich tracts occupy residues 80-108 (GESEEEEDEDDDDDDDDDDDDEEGEDEDE) and 148-167 (DDEGGDSGEDDQDSHEDEEN). A compositionally biased stretch (basic and acidic residues) spans 222–232 (SPSDKAKSEEK). A C2H2-type 1 zinc finger spans residues 235-258 (LTCDKCPRVFNTRWYLEKHMNVTH). The C2H2-type 2; degenerate zinc-finger motif lies at 262–284 (QICDKCGKKFVLESELSLHLQTD). C2H2-type zinc fingers lie at residues 289–312 (IQCITCNKTFKKLWSLHEHIKIVH), 319–341 (FSCEICEKKFYTMAHVRKHLVAH), 347–369 (FTCETCGKSFKRSMSLKVHSLQH), 375–397 (FRCENCDERFQYKYQLRSHMSIH), 403–425 (FMCQWCGKDFNMKQYFDEHMKTH), and 431–453 (FICEICGKSFTSRPNMKRHRRTH). The segment at 459–482 (YPCDVCGMRFRFSNMLKAHKEKCF) adopts a C2H2-type 9; degenerate zinc-finger fold. The segment at 543-575 (PFSHLHLHPHSHTHHLAVPPVPHLPPPPALFKS) is disordered. A compositionally biased stretch (basic residues) spans 545-557 (SHLHLHPHSHTHH). Residues 561–571 (PPVPHLPPPPA) show a composition bias toward pro residues.

The protein belongs to the krueppel C2H2-type zinc-finger protein family.

It is found in the nucleus. In terms of biological role, may be involved in transcriptional regulation. The protein is Zinc finger protein 652-B (znf652-b) of Xenopus laevis (African clawed frog).